A 141-amino-acid chain; its full sequence is Large ribosomal subunit protein uL11 (141 aa).

It belongs to the universal ribosomal protein uL11 family. In terms of assembly, part of the ribosomal stalk of the 50S ribosomal subunit. Interacts with L10 and the large rRNA to form the base of the stalk. L10 forms an elongated spine to which L12 dimers bind in a sequential fashion forming a multimeric L10(L12)X complex. In terms of processing, one or more lysine residues are methylated.

Functionally, forms part of the ribosomal stalk which helps the ribosome interact with GTP-bound translation factors. This is Large ribosomal subunit protein uL11 from Sulfurimonas denitrificans (strain ATCC 33889 / DSM 1251) (Thiomicrospira denitrificans (strain ATCC 33889 / DSM 1251)).